A 972-amino-acid polypeptide reads, in one-letter code: Glycine dehydrogenase (decarboxylating) (972 aa).

An N6-(pyridoxal phosphate)lysine modification is found at Lys-713.

It belongs to the GcvP family. As to quaternary structure, the glycine cleavage system is composed of four proteins: P, T, L and H. It depends on pyridoxal 5'-phosphate as a cofactor.

It carries out the reaction N(6)-[(R)-lipoyl]-L-lysyl-[glycine-cleavage complex H protein] + glycine + H(+) = N(6)-[(R)-S(8)-aminomethyldihydrolipoyl]-L-lysyl-[glycine-cleavage complex H protein] + CO2. In terms of biological role, the glycine cleavage system catalyzes the degradation of glycine. The P protein binds the alpha-amino group of glycine through its pyridoxal phosphate cofactor; CO(2) is released and the remaining methylamine moiety is then transferred to the lipoamide cofactor of the H protein. The sequence is that of Glycine dehydrogenase (decarboxylating) from Aromatoleum aromaticum (strain DSM 19018 / LMG 30748 / EbN1) (Azoarcus sp. (strain EbN1)).